We begin with the raw amino-acid sequence, 163 residues long: Staphylokinase (163 aa).

The first 27 residues, 1–27, serve as a signal peptide directing secretion; sequence MLKRGLLFLTVLLLLFSFSSITNEVSA.

It belongs to the staphylokinase family.

Its subcellular location is the secreted. Potent plasminogen activator that converts plasminogen into plasmin. It forms a 1:1 complex with plasmin, which in turn activates other plasminogen molecules. The polypeptide is Staphylokinase (sak) (Staphylococcus aureus (strain MRSA252)).